Here is a 256-residue protein sequence, read N- to C-terminus: Small ribosomal subunit protein eS1A (256 aa).

Residue A2 is modified to N-acetylalanine; partial.

This sequence belongs to the eukaryotic ribosomal protein eS1 family. In terms of assembly, component of the small ribosomal subunit. Mature ribosomes consist of a small (40S) and a large (60S) subunit. The 40S subunit contains about 33 different proteins and 1 molecule of RNA (18S). The 60S subunit contains about 49 different proteins and 3 molecules of RNA (25S, 5.8S and 5S).

It localises to the cytoplasm. The protein is Small ribosomal subunit protein eS1A of Debaryomyces hansenii (strain ATCC 36239 / CBS 767 / BCRC 21394 / JCM 1990 / NBRC 0083 / IGC 2968) (Yeast).